Consider the following 245-residue polypeptide: Eukaryotic translation initiation factor 3 subunit K (245 aa).

The 182-residue stretch at 46-227 (YDCYANLALL…EAKGTVVREN (182 aa)) folds into the PCI domain.

It belongs to the eIF-3 subunit K family. In terms of assembly, component of the eukaryotic translation initiation factor 3 (eIF-3) complex.

Its subcellular location is the cytoplasm. In terms of biological role, component of the eukaryotic translation initiation factor 3 (eIF-3) complex, which is involved in protein synthesis of a specialized repertoire of mRNAs and, together with other initiation factors, stimulates binding of mRNA and methionyl-tRNAi to the 40S ribosome. The eIF-3 complex specifically targets and initiates translation of a subset of mRNAs involved in cell proliferation. The polypeptide is Eukaryotic translation initiation factor 3 subunit K (Sclerotinia sclerotiorum (strain ATCC 18683 / 1980 / Ss-1) (White mold)).